A 42-amino-acid chain; its full sequence is Potassium channel toxin gamma-KTx 1.2 (42 aa).

Disulfide bonds link C5–C23, C11–C34, C20–C39, and C24–C41.

Belongs to the ergtoxin family. Gamma-KTx 1 subfamily. As to expression, expressed by the venom gland.

It localises to the secreted. Functionally, blocks Kv11/ERG potassium channels. The polypeptide is Potassium channel toxin gamma-KTx 1.2 (Centruroides elegans (Bark scorpion)).